The chain runs to 175 residues: NADH-quinone oxidoreductase subunit I (175 aa).

2 4Fe-4S ferredoxin-type domains span residues 69-98 (KRDE…IEAG) and 115-144 (KKFE…LDGP). Positions 78, 81, 84, 88, 124, 127, 130, and 134 each coordinate [4Fe-4S] cluster.

This sequence belongs to the complex I 23 kDa subunit family. As to quaternary structure, NDH-1 is composed of 14 different subunits. Subunits NuoA, H, J, K, L, M, N constitute the membrane sector of the complex. Requires [4Fe-4S] cluster as cofactor.

It localises to the cell inner membrane. The catalysed reaction is a quinone + NADH + 5 H(+)(in) = a quinol + NAD(+) + 4 H(+)(out). Its function is as follows. NDH-1 shuttles electrons from NADH, via FMN and iron-sulfur (Fe-S) centers, to quinones in the respiratory chain. The immediate electron acceptor for the enzyme in this species is believed to be ubiquinone. Couples the redox reaction to proton translocation (for every two electrons transferred, four hydrogen ions are translocated across the cytoplasmic membrane), and thus conserves the redox energy in a proton gradient. This is NADH-quinone oxidoreductase subunit I from Leptospira borgpetersenii serovar Hardjo-bovis (strain JB197).